A 253-amino-acid chain; its full sequence is E3 ubiquitin-protein ligase MARCHF3 (253 aa).

The RING-CH-type zinc finger occupies 63 to 123; the sequence is SPFNDRPMCR…ELCHFRFAVE (61 aa). Zn(2+)-binding residues include Cys-71, Cys-74, Cys-87, Cys-89, His-97, Cys-100, Cys-113, and Cys-116. Transmembrane regions (helical) follow at residues 145 to 165 and 182 to 202; these read LFGD…SGWL and AVGL…WTLV. Ser-237 and Ser-243 each carry phosphoserine.

As to quaternary structure, interacts with MARCHF2 and STX6.

It is found in the cytoplasmic vesicle membrane. It localises to the early endosome membrane. The enzyme catalyses S-ubiquitinyl-[E2 ubiquitin-conjugating enzyme]-L-cysteine + [acceptor protein]-L-lysine = [E2 ubiquitin-conjugating enzyme]-L-cysteine + N(6)-ubiquitinyl-[acceptor protein]-L-lysine.. Its pathway is protein modification; protein ubiquitination. Functionally, E3 ubiquitin-protein ligase which may be involved in endosomal trafficking. E3 ubiquitin ligases accept ubiquitin from an E2 ubiquitin-conjugating enzyme in the form of a thioester and then directly transfer the ubiquitin to targeted substrates. This is E3 ubiquitin-protein ligase MARCHF3 (MARCHF3) from Bos taurus (Bovine).